Consider the following 596-residue polypeptide: Probable tripeptidyl-peptidase SED2 (596 aa).

An N-terminal signal peptide occupies residues 1 to 16 (MRLLKFVCLLASVAAA). A propeptide spans 17–203 (KPTPGASHKV…LESMSVEEFA (187 aa)) (removed in mature form). The region spanning 210 to 596 (LVTTACLREL…NFQALTKVLP (387 aa)) is the Peptidase S53 domain. An N-linked (GlcNAc...) asparagine glycan is attached at asparagine 265. Residues glutamate 286 and aspartate 290 each act as charge relay system in the active site. A glycan (N-linked (GlcNAc...) asparagine) is linked at asparagine 403. The active-site Charge relay system is the serine 501. Aspartate 543 and isoleucine 544 together coordinate Ca(2+). N-linked (GlcNAc...) asparagine glycosylation occurs at asparagine 572. Ca(2+) contacts are provided by glycine 576 and aspartate 578.

Ca(2+) is required as a cofactor.

The protein resides in the secreted. Its subcellular location is the extracellular space. The enzyme catalyses Release of an N-terminal tripeptide from a polypeptide.. Its function is as follows. Secreted tripeptidyl-peptidase which degrades proteins at acidic pHs and is involved in virulence. This is Probable tripeptidyl-peptidase SED2 (SED2) from Arthroderma benhamiae (strain ATCC MYA-4681 / CBS 112371) (Trichophyton mentagrophytes).